A 691-amino-acid chain; its full sequence is Ubiquitin-like domain-containing protein CIP73 (691 aa).

The region spanning 22 to 97 (IEIKIKMLDS…LHLVARHPDL (76 aa)) is the Ubiquitin-like domain. Disordered regions lie at residues 92 to 118 (ARHP…TGHG), 176 to 203 (TGLG…ISSD), 264 to 283 (RNEE…EGLS), 432 to 473 (ASTT…ASIA), 499 to 554 (SVNT…SSRV), 590 to 624 (EIHV…EPNV), and 645 to 691 (HIGR…QKME). Polar residues-rich tracts occupy residues 104–118 (PNHS…TGHG), 178–189 (LGRTSDFTGNPS), 273–283 (SRLSSTPEGLS), 446–465 (TQSA…QTTS), and 499–523 (SVNT…STAE). Basic and acidic residues predominate over residues 525 to 535 (TLHRQSMEDSA). Over residues 536-554 (RNGTLPTPNTQQEPSSSRV) the composition is skewed to polar residues. The span at 597 to 617 (SSQGTTAGVTSAATSSGAAQA) shows a compositional bias: low complexity.

Interacts with CCAMK. In terms of processing, phosphorylated at the N-terminus by CCAMK. In terms of tissue distribution, highly epressed in roots. Expressed at very low levels in leaves and stems.

The protein resides in the nucleus. Functionally, involved in root nodulation. Required for root nodule organogenesis after infection by symbiotic rhizobia. Probably not involved in arbuscular mycorrhizal (AM) symbiosis. Acts downstream of CCAMK. The protein is Ubiquitin-like domain-containing protein CIP73 of Lotus japonicus (Lotus corniculatus var. japonicus).